The sequence spans 278 residues: Polyamine aminopropyltransferase (278 aa).

Positions 3–240 (EGWFTEAVED…GWWSATLMVN (238 aa)) constitute a PABS domain. Residue Gln-33 coordinates S-methyl-5'-thioadenosine. Positions 64 and 88 each coordinate spermidine. S-methyl-5'-thioadenosine is bound by residues Glu-108 and 139–140 (DG). Asp-158 serves as the catalytic Proton acceptor. Residue 158 to 161 (DSTD) coordinates spermidine. Pro-165 contributes to the S-methyl-5'-thioadenosine binding site.

Belongs to the spermidine/spermine synthase family. Homodimer or homotetramer.

It is found in the cytoplasm. The enzyme catalyses S-adenosyl 3-(methylsulfanyl)propylamine + putrescine = S-methyl-5'-thioadenosine + spermidine + H(+). The protein operates within amine and polyamine biosynthesis; spermidine biosynthesis; spermidine from putrescine: step 1/1. In terms of biological role, catalyzes the irreversible transfer of a propylamine group from the amino donor S-adenosylmethioninamine (decarboxy-AdoMet) to putrescine (1,4-diaminobutane) to yield spermidine. The protein is Polyamine aminopropyltransferase of Halorhodospira halophila (strain DSM 244 / SL1) (Ectothiorhodospira halophila (strain DSM 244 / SL1)).